The following is a 109-amino-acid chain: uncharacterized protein (109 aa).

One can recognise an HTH hxlR-type domain in the interval A10 to M109.

This is an uncharacterized protein from Bacillus subtilis (strain 168).